The chain runs to 178 residues: Interleukin-10 (178 aa).

The signal sequence occupies residues 1–18 (MHSSALLCCLVFLTGVRA). 2 disulfide bridges follow: cysteine 30–cysteine 126 and cysteine 80–cysteine 132. N-linked (GlcNAc...) asparagine glycosylation occurs at asparagine 134.

Belongs to the IL-10 family. Homodimer. Interacts with IL10RA and IL10RB.

The protein resides in the secreted. Functionally, major immune regulatory cytokine that acts on many cells of the immune system where it has profound anti-inflammatory functions, limiting excessive tissue disruption caused by inflammation. Mechanistically, IL10 binds to its heterotetrameric receptor comprising IL10RA and IL10RB leading to JAK1 and STAT2-mediated phosphorylation of STAT3. In turn, STAT3 translocates to the nucleus where it drives expression of anti-inflammatory mediators. Targets antigen-presenting cells (APCs) such as macrophages and monocytes and inhibits their release of pro-inflammatory cytokines including granulocyte-macrophage colony-stimulating factor /GM-CSF, granulocyte colony-stimulating factor/G-CSF, IL-1 alpha, IL-1 beta, IL-6, IL-8 and TNF-alpha. Also interferes with antigen presentation by reducing the expression of MHC-class II and co-stimulatory molecules, thereby inhibiting their ability to induce T cell activation. In addition, controls the inflammatory response of macrophages by reprogramming essential metabolic pathways including mTOR signaling. The protein is Interleukin-10 (IL10) of Saimiri sciureus (Common squirrel monkey).